We begin with the raw amino-acid sequence, 462 residues long: Integrator complex subunit 12 (462 aa).

The interval 42–129 is disordered; that stretch reads GIDSSYRPSQ…LEKPETQSSP (88 aa). Positions 59 to 86 are enriched in polar residues; that stretch reads ISSTKNISIKQEPKISSSLPSGNNNGKV. Residue K68 forms a Glycyl lysine isopeptide (Lys-Gly) (interchain with G-Cter in SUMO2) linkage. The span at 88–124 shows a compositional bias: basic and acidic residues; the sequence is TTEKVKKEAEKRPADKMKSDITEGVDIPKKPRLEKPE. Phosphoserine is present on S128. A PHD-type zinc finger spans residues 159–215; sequence GLACVVCRQMMVASGNQLVECQECHNLYHRDCHKPQVTDKEANDPRLVWYCARCTRQ. Residue K254 forms a Glycyl lysine isopeptide (Lys-Gly) (interchain with G-Cter in SUMO2) linkage. Positions 301–328 are enriched in polar residues; it reads SSAGPSTAKLSSTTQNSTGKPATSSANQ. A disordered region spans residues 301 to 462; sequence SSAGPSTAKL…KKAAQKKLKK (162 aa). 2 stretches are compositionally biased toward low complexity: residues 347-358 and 396-437; these read KIGSNNSTTPTV and GNSS…GPTS. A compositionally biased stretch (basic residues) spans 449-462; sequence QMVKKKAAQKKLKK.

Belongs to the Integrator subunit 12 family. As to quaternary structure, component of the Integrator complex, composed of core subunits INTS1, INTS2, INTS3, INTS4, INTS5, INTS6, INTS7, INTS8, INTS9/RC74, INTS10, INTS11/CPSF3L, INTS12, INTS13, INTS14 and INTS15. The core complex associates with protein phosphatase 2A subunits PPP2CA and PPP2R1A, to form the Integrator-PP2A (INTAC) complex. In terms of processing, dephosphorylated at Ser-128 by the PNUTS-PP1 complex, promoting RNA polymerase II transcription pause-release.

The protein localises to the nucleus. Functionally, component of the integrator complex, a multiprotein complex that terminates RNA polymerase II (Pol II) transcription in the promoter-proximal region of genes. The integrator complex provides a quality checkpoint during transcription elongation by driving premature transcription termination of transcripts that are unfavorably configured for transcriptional elongation: the complex terminates transcription by (1) catalyzing dephosphorylation of the C-terminal domain (CTD) of Pol II subunit POLR2A/RPB1 and SUPT5H/SPT5, (2) degrading the exiting nascent RNA transcript via endonuclease activity and (3) promoting the release of Pol II from bound DNA. The integrator complex is also involved in terminating the synthesis of non-coding Pol II transcripts, such as enhancer RNAs (eRNAs), small nuclear RNAs (snRNAs), telomerase RNAs and long non-coding RNAs (lncRNAs). Mediates recruitment of cytoplasmic dynein to the nuclear envelope, probably as component of the integrator complex. This is Integrator complex subunit 12 (INTS12) from Macaca fascicularis (Crab-eating macaque).